The chain runs to 289 residues: ATP synthase gamma chain (289 aa).

Belongs to the ATPase gamma chain family. F-type ATPases have 2 components, CF(1) - the catalytic core - and CF(0) - the membrane proton channel. CF(1) has five subunits: alpha(3), beta(3), gamma(1), delta(1), epsilon(1). CF(0) has three main subunits: a, b and c.

Its subcellular location is the cell inner membrane. Functionally, produces ATP from ADP in the presence of a proton gradient across the membrane. The gamma chain is believed to be important in regulating ATPase activity and the flow of protons through the CF(0) complex. The sequence is that of ATP synthase gamma chain from Azoarcus sp. (strain BH72).